Consider the following 97-residue polypeptide: Small ribosomal subunit protein bS18c (97 aa).

Belongs to the bacterial ribosomal protein bS18 family. As to quaternary structure, part of the 30S ribosomal subunit.

Its subcellular location is the plastid. It localises to the chloroplast. The polypeptide is Small ribosomal subunit protein bS18c (Oenothera glazioviana (Large-flowered evening primrose)).